The primary structure comprises 350 residues: MPNTHKITPQEALLRTIEHREIFHDEMLHIMRGIMTGEWSPVMMAALITGLRVKKETIGEITAAAQVMREFSTKVNVADTSHLVDIVGTGGDGSHTFNISTCAMFVAAAAGARVSKHGGRSVSSKSGSADVMESLGVNINLSPEAIAQCIEQVGVGFMFAPNHHPAMKNVAPVRKELGIKTIFNLLGPLTNPAGAPNILMGVFHPDLVGIQVRALQRLGAEHAVVVYGKDGMDEVSLGATTLVGELKHGEITEYEIHPEDFGMVMASNRALKVETPEQSKTMLQGVLDNAAGAPKDIVILNAGVALYAANVVPTMSAGIDKARVAIESGAARAKLAQLVSMSQQLKGAAK.

5-phospho-alpha-D-ribose 1-diphosphate contacts are provided by residues glycine 88, 91 to 92, threonine 96, 98 to 101, 116 to 124, and serine 128; these read GD, NIST, and KHGGRSVSS. Glycine 88 is a binding site for anthranilate. Residue serine 100 coordinates Mg(2+). Arginine 174 contacts anthranilate. Mg(2+) is bound by residues aspartate 233 and glutamate 234.

This sequence belongs to the anthranilate phosphoribosyltransferase family. Homodimer. Mg(2+) is required as a cofactor.

The enzyme catalyses N-(5-phospho-beta-D-ribosyl)anthranilate + diphosphate = 5-phospho-alpha-D-ribose 1-diphosphate + anthranilate. It functions in the pathway amino-acid biosynthesis; L-tryptophan biosynthesis; L-tryptophan from chorismate: step 2/5. Catalyzes the transfer of the phosphoribosyl group of 5-phosphorylribose-1-pyrophosphate (PRPP) to anthranilate to yield N-(5'-phosphoribosyl)-anthranilate (PRA). This chain is Anthranilate phosphoribosyltransferase, found in Albidiferax ferrireducens (strain ATCC BAA-621 / DSM 15236 / T118) (Rhodoferax ferrireducens).